The chain runs to 303 residues: Sulfate adenylyltransferase subunit 2 (303 aa).

The protein belongs to the PAPS reductase family. CysD subfamily. As to quaternary structure, heterodimer composed of CysD, the smaller subunit, and CysN.

The catalysed reaction is sulfate + ATP + H(+) = adenosine 5'-phosphosulfate + diphosphate. Its pathway is sulfur metabolism; hydrogen sulfide biosynthesis; sulfite from sulfate: step 1/3. Functionally, with CysN forms the ATP sulfurylase (ATPS) that catalyzes the adenylation of sulfate producing adenosine 5'-phosphosulfate (APS) and diphosphate, the first enzymatic step in sulfur assimilation pathway. APS synthesis involves the formation of a high-energy phosphoric-sulfuric acid anhydride bond driven by GTP hydrolysis by CysN coupled to ATP hydrolysis by CysD. The chain is Sulfate adenylyltransferase subunit 2 from Bacteroides fragilis (strain YCH46).